The following is a 406-amino-acid chain: MAVNLTEKTAEQLPDIDGIALYTAQAGVKKPGHTDLTLIAVAAGSTVGAVFTTNRFCAAPVHIAKSHLFDEDGVRALVINTGNANAGTGAQGRIDALAVCAAAARQIGCKPNQVMPFSTGVILEPLPADKIIAALPKMQPAFWNEAARAIMTTDTVPKAASREGKVGDQHTVRATGIAKGSGMIHPNMATMLGFIATDAKVSQPVLQLMTQEIADETFNTITVDGDTSTNDSFVIIATGKNSQSEIDNIADPRYAQLKELLCSLALELAQAIVRDGEGATKFITVRVENAKTCDEARQAAYAAARSPLVKTAFFASDPNLGRLLAAIGYADVADLDTDLVEMYLDDILVAEHGGRAASYTEAQGQAVMSKDEITVRIKLHRGQAAATVYTCDLSHGYVSINADYRS.

Residues Thr-152, Lys-179, Thr-190, Glu-277, Asn-401, and Ser-406 each coordinate substrate. Thr-190 functions as the Nucleophile in the catalytic mechanism.

Belongs to the ArgJ family. In terms of assembly, heterotetramer of two alpha and two beta chains.

The protein resides in the cytoplasm. The enzyme catalyses N(2)-acetyl-L-ornithine + L-glutamate = N-acetyl-L-glutamate + L-ornithine. It catalyses the reaction L-glutamate + acetyl-CoA = N-acetyl-L-glutamate + CoA + H(+). It participates in amino-acid biosynthesis; L-arginine biosynthesis; L-ornithine and N-acetyl-L-glutamate from L-glutamate and N(2)-acetyl-L-ornithine (cyclic): step 1/1. Its pathway is amino-acid biosynthesis; L-arginine biosynthesis; N(2)-acetyl-L-ornithine from L-glutamate: step 1/4. Functionally, catalyzes two activities which are involved in the cyclic version of arginine biosynthesis: the synthesis of N-acetylglutamate from glutamate and acetyl-CoA as the acetyl donor, and of ornithine by transacetylation between N(2)-acetylornithine and glutamate. This Neisseria gonorrhoeae (strain ATCC 700825 / FA 1090) protein is Arginine biosynthesis bifunctional protein ArgJ.